Reading from the N-terminus, the 440-residue chain is P47(GAG-CRK) protein (440 aa).

The segment at 1 to 208 (MEAVIKVISS…TPRGAEQPRA (208 aa)) is gag first part. The PPXY motif signature appears at 174–177 (PPPY). Residues 183–230 (YPSLAGVGEQQGQGGDTPRGAEQPRAGRGAGHRGLRRPAGRGQRVRPA) form a disordered region. Positions 209–437 (GRGAGHRGLR…PSSASVSTLT (229 aa)) are CRK. Basic residues predominate over residues 212–221 (AGHRGLRRPA). One can recognise an SH2 domain in the interval 248–354 (WYWGRLSRGD…LDTTTLIEPV (107 aa)). The SH3 domain maps to 368–428 (EEVEYVRALF…PVPYVEKCRP (61 aa)). Positions 438–440 (GGR) are gag second part.

The chain is P47(GAG-CRK) protein from Avian sarcoma virus CT10 (Avian sarcoma virus (strain CT10)).